The chain runs to 209 residues: Large ribosomal subunit protein uL3 (209 aa).

A disordered region spans residues 128–166 (FGGGSRTHGQSDRLRAPGSVGGSSDPSRTFKGTRMAGRM).

This sequence belongs to the universal ribosomal protein uL3 family. In terms of assembly, part of the 50S ribosomal subunit. Forms a cluster with proteins L14 and L19.

Functionally, one of the primary rRNA binding proteins, it binds directly near the 3'-end of the 23S rRNA, where it nucleates assembly of the 50S subunit. In Chlorobaculum parvum (strain DSM 263 / NCIMB 8327) (Chlorobium vibrioforme subsp. thiosulfatophilum), this protein is Large ribosomal subunit protein uL3.